We begin with the raw amino-acid sequence, 646 residues long: Nitrous-oxide reductase (646 aa).

Positions 1 to 21 (MMSKHPHSPSTPQDETPSVPG) are disordered. A signal peptide (tat-type signal) is located at residues 1–52 (MMSKHPHSPSTPQDETPSVPGRRRFMNSAALAGLATVVACTDKGAPAGSAAA). Residues histidine 140, histidine 141, and histidine 189 each coordinate Cu cation. 5 residues coordinate Ca(2+): tyrosine 272, glutamate 275, methionine 283, aspartate 289, and asparagine 342. Cu cation contacts are provided by histidine 344, histidine 400, and histidine 452. The Ca(2+) site is built by lysine 473 and glutamate 488. Positions 513, 592, 627, 629, 631, 635, and 638 each coordinate Cu cation. Positions 551 to 646 (KKVTVRLTSQ…EMRSRMIVEA (96 aa)) are COX2-like.

Belongs to the NosZ family. It in the C-terminal section; belongs to the cytochrome c oxidase subunit 2 family. In terms of assembly, homodimer. The cofactor is Ca(2+). Cu cation serves as cofactor. In terms of processing, predicted to be exported by the Tat system. The position of the signal peptide cleavage has not been experimentally proven.

The protein localises to the periplasm. The enzyme catalyses N2 + 2 Fe(III)-[cytochrome c] + H2O = nitrous oxide + 2 Fe(II)-[cytochrome c] + 2 H(+). It participates in nitrogen metabolism; nitrate reduction (denitrification); dinitrogen from nitrate: step 4/4. Functionally, nitrous-oxide reductase is part of a bacterial respiratory system which is activated under anaerobic conditions in the presence of nitrate or nitrous oxide. The sequence is that of Nitrous-oxide reductase (nosZ) from Ralstonia nicotianae (strain ATCC BAA-1114 / GMI1000) (Ralstonia solanacearum).